A 307-amino-acid chain; its full sequence is MNHATSELHDESAVTSVPETTRIQDLKALVKMGIVNSNTLTVFTGFWLALHFNGLSVMDNLDKLFFTIVGSGLVMAGVCCLNNYIDRDIDPLMERTKTRPTVTGKYKPGFALTFGLVILLLGFVFLLLTTPMAVLMGFIGAFTYVVLYSLWTKRKYTLNTVVGSISGAVPPLIGWAAIDPSLGHPIAWMLFLIMFIWQIPHFLALAMKRVDEYRNAGIPMLPVVHGFEITKRQIMIWTVCLLPLPFYMSGLGITFMVIATLLNIGWIVLGFYGFRKKDDIKWSVQMFVYSLNYLTILFVSMIVVTFF.

The next 8 membrane-spanning stretches (helical) occupy residues 32–52 (MGIVNSNTLTVFTGFWLALHF), 65–85 (FFTIVGSGLVMAGVCCLNNYI), 108–128 (PGFALTFGLVILLLGFVFLLL), 131–151 (PMAVLMGFIGAFTYVVLYSLW), 158–178 (LNTVVGSISGAVPPLIGWAAI), 186–206 (IAWMLFLIMFIWQIPHFLALA), 251–271 (LGITFMVIATLLNIGWIVLGF), and 287–307 (FVYSLNYLTILFVSMIVVTFF).

It belongs to the UbiA prenyltransferase family. Protoheme IX farnesyltransferase subfamily. As to quaternary structure, interacts with CtaA.

It is found in the cell membrane. The enzyme catalyses heme b + (2E,6E)-farnesyl diphosphate + H2O = Fe(II)-heme o + diphosphate. The protein operates within porphyrin-containing compound metabolism; heme O biosynthesis; heme O from protoheme: step 1/1. Its function is as follows. Converts heme B (protoheme IX) to heme O by substitution of the vinyl group on carbon 2 of heme B porphyrin ring with a hydroxyethyl farnesyl side group. The chain is Protoheme IX farnesyltransferase from Bacillus cereus (strain G9842).